The following is a 370-amino-acid chain: Chloromuconate cycloisomerase (370 aa).

Lysine 165 functions as the Proton acceptor in the catalytic mechanism. Aspartate 194, glutamate 220, and aspartate 245 together coordinate Mn(2+). Glutamate 323 acts as the Proton donor in catalysis.

Belongs to the mandelate racemase/muconate lactonizing enzyme family. The cofactor is Mn(2+).

It catalyses the reaction 2-[(2R)-2-chloro-2,5-dihydro-5-oxofuryl]acetate = 3-chloro-cis,cis-muconate + H(+). It participates in aromatic compound metabolism; 3-chlorocatechol degradation. This Pseudomonas sp. (strain P51) protein is Chloromuconate cycloisomerase (tcbD).